Here is a 143-residue protein sequence, read N- to C-terminus: Mini-ribonuclease 3 (143 aa).

Residue Asp-35 is part of the active site.

This sequence belongs to the MrnC RNase family. In terms of assembly, homodimer. Mg(2+) is required as a cofactor.

The protein resides in the cytoplasm. Involved in correct processing of both the 5' and 3' ends of 23S rRNA precursor. Processes 30S rRNA precursor transcript even in absence of ribonuclease 3 (Rnc); Rnc processes 30S rRNA into smaller rRNA precursors. The chain is Mini-ribonuclease 3 from Synechocystis sp. (strain ATCC 27184 / PCC 6803 / Kazusa).